We begin with the raw amino-acid sequence, 234 residues long: 2-C-methyl-D-erythritol 4-phosphate cytidylyltransferase (234 aa).

This sequence belongs to the IspD/TarI cytidylyltransferase family. IspD subfamily.

It carries out the reaction 2-C-methyl-D-erythritol 4-phosphate + CTP + H(+) = 4-CDP-2-C-methyl-D-erythritol + diphosphate. Its pathway is isoprenoid biosynthesis; isopentenyl diphosphate biosynthesis via DXP pathway; isopentenyl diphosphate from 1-deoxy-D-xylulose 5-phosphate: step 2/6. Functionally, catalyzes the formation of 4-diphosphocytidyl-2-C-methyl-D-erythritol from CTP and 2-C-methyl-D-erythritol 4-phosphate (MEP). The sequence is that of 2-C-methyl-D-erythritol 4-phosphate cytidylyltransferase from Pseudomonas aeruginosa (strain ATCC 15692 / DSM 22644 / CIP 104116 / JCM 14847 / LMG 12228 / 1C / PRS 101 / PAO1).